A 392-amino-acid chain; its full sequence is L-lactate dehydrogenase (392 aa).

In terms of domain architecture, FMN hydroxy acid dehydrogenase spans 1 to 380 (MIISASTDYR…GSDSLVTGSA (380 aa)). Residue tyrosine 24 coordinates substrate. Positions 106 and 127 each coordinate FMN. Tyrosine 129 is a substrate binding site. Residue threonine 155 participates in FMN binding. Position 164 (arginine 164) interacts with substrate. Lysine 251 provides a ligand contact to FMN. Histidine 275 serves as the catalytic Proton acceptor. Position 278 (arginine 278) interacts with substrate. 306-330 (DSGVRNGLDVVRMIAMGADTILLGR) contacts FMN.

This sequence belongs to the FMN-dependent alpha-hydroxy acid dehydrogenase family. FMN serves as cofactor.

The protein localises to the cell inner membrane. The enzyme catalyses (S)-lactate + A = pyruvate + AH2. Catalyzes the conversion of L-lactate to pyruvate. Is coupled to the respiratory chain. The chain is L-lactate dehydrogenase from Chromohalobacter salexigens (strain ATCC BAA-138 / DSM 3043 / CIP 106854 / NCIMB 13768 / 1H11).